The chain runs to 591 residues: Indole-3-acetic acid-amido synthetase GH3.10 (591 aa).

The protein belongs to the IAA-amido conjugating enzyme family. As to expression, expressed in cotyledons and hypocotyls.

Its function is as follows. Catalyzes the synthesis of indole-3-acetic acid (IAA)-amino acid conjugates, providing a mechanism for the plant to cope with the presence of excess auxin. Involved in red light-specific hypocotyl elongation. May act downstream of a red light signal transduction and determine the degree of hypocotyl elongation. This Arabidopsis thaliana (Mouse-ear cress) protein is Indole-3-acetic acid-amido synthetase GH3.10.